The primary structure comprises 576 residues: Arginine--tRNA ligase (576 aa).

The short motif at alanine 132–histidine 142 is the 'HIGH' region element.

This sequence belongs to the class-I aminoacyl-tRNA synthetase family. Monomer.

Its subcellular location is the cytoplasm. The enzyme catalyses tRNA(Arg) + L-arginine + ATP = L-arginyl-tRNA(Arg) + AMP + diphosphate. The protein is Arginine--tRNA ligase of Ehrlichia chaffeensis (strain ATCC CRL-10679 / Arkansas).